A 100-amino-acid chain; its full sequence is Integration host factor subunit alpha (100 aa).

Positions 53-72 are disordered; that stretch reads FDLRDKRQRPGRNPKTGEEI.

Belongs to the bacterial histone-like protein family. In terms of assembly, heterodimer of an alpha and a beta chain.

In terms of biological role, this protein is one of the two subunits of integration host factor, a specific DNA-binding protein that functions in genetic recombination as well as in transcriptional and translational control. The chain is Integration host factor subunit alpha from Pseudomonas entomophila (strain L48).